The primary structure comprises 156 residues: Small ribosomal subunit protein uS7 (156 aa).

It belongs to the universal ribosomal protein uS7 family. Part of the 30S ribosomal subunit. Contacts proteins S9 and S11.

One of the primary rRNA binding proteins, it binds directly to 16S rRNA where it nucleates assembly of the head domain of the 30S subunit. Is located at the subunit interface close to the decoding center, probably blocks exit of the E-site tRNA. This Pectobacterium carotovorum subsp. carotovorum (strain PC1) protein is Small ribosomal subunit protein uS7.